Consider the following 404-residue polypeptide: Cysteine desulfurase IscS (404 aa).

Pyridoxal 5'-phosphate is bound by residues 75 to 76, asparagine 155, glutamine 183, and 203 to 205; these read AT and SAH. Lysine 206 is modified (N6-(pyridoxal phosphate)lysine). Threonine 243 is a binding site for pyridoxal 5'-phosphate. Cysteine 328 serves as the catalytic Cysteine persulfide intermediate. Residue cysteine 328 coordinates [2Fe-2S] cluster.

This sequence belongs to the class-V pyridoxal-phosphate-dependent aminotransferase family. NifS/IscS subfamily. In terms of assembly, homodimer. Forms a heterotetramer with IscU, interacts with other sulfur acceptors. Pyridoxal 5'-phosphate serves as cofactor.

Its subcellular location is the cytoplasm. It catalyses the reaction (sulfur carrier)-H + L-cysteine = (sulfur carrier)-SH + L-alanine. It participates in cofactor biosynthesis; iron-sulfur cluster biosynthesis. In terms of biological role, master enzyme that delivers sulfur to a number of partners involved in Fe-S cluster assembly, tRNA modification or cofactor biosynthesis. Catalyzes the removal of elemental sulfur atoms from cysteine to produce alanine. Functions as a sulfur delivery protein for Fe-S cluster synthesis onto IscU, an Fe-S scaffold assembly protein, as well as other S acceptor proteins. This Pseudomonas fluorescens (strain ATCC BAA-477 / NRRL B-23932 / Pf-5) protein is Cysteine desulfurase IscS.